A 307-amino-acid polypeptide reads, in one-letter code: N-acetylmuramic acid 6-phosphate etherase (307 aa).

The SIS domain maps to 62–225; that stretch reads IVAAFQKGGR…TTASMIRIGK (164 aa). E90 functions as the Proton donor in the catalytic mechanism. E121 is an active-site residue.

It belongs to the GCKR-like family. MurNAc-6-P etherase subfamily. As to quaternary structure, homodimer.

It carries out the reaction N-acetyl-D-muramate 6-phosphate + H2O = N-acetyl-D-glucosamine 6-phosphate + (R)-lactate. It participates in amino-sugar metabolism; 1,6-anhydro-N-acetylmuramate degradation. Its pathway is amino-sugar metabolism; N-acetylmuramate degradation. It functions in the pathway cell wall biogenesis; peptidoglycan recycling. Its function is as follows. Specifically catalyzes the cleavage of the D-lactyl ether substituent of MurNAc 6-phosphate, producing GlcNAc 6-phosphate and D-lactate. Together with AnmK, is also required for the utilization of anhydro-N-acetylmuramic acid (anhMurNAc) either imported from the medium or derived from its own cell wall murein, and thus plays a role in cell wall recycling. The polypeptide is N-acetylmuramic acid 6-phosphate etherase (Rhizobium rhizogenes (strain K84 / ATCC BAA-868) (Agrobacterium radiobacter)).